The primary structure comprises 689 residues: MSEKTFLVEIGTEELPPKALRSLAESFAANVTAELDNAGLAHGNVEWFAAPRRLALKVANLAASQPDREVEKRGPAIAQAFDAEGKPSKAAEGWARGCGITVDQAERLTTDKGEWLLYRAHVKGESAEALLPNMIATSLAKLPIPKLMRWGASDVHFVRPVHTVTLLLGDKLIPATILGIQSDRVIRGHRFMGEPEITIDTADQYPQILLERGKVVADYEARKAKIKADAEEAARQIGGNADLSESLLEEVTSLVEWPVVLTAKFEEKFLAVPSEALVYTMKGDQKYFPVYAADGKLLPNFIFVANIESKDPQQIISGNEKVVRPRLADAEFFFNTDRKKRLEDNLPRLQTVLFQQQLGTLRDKTDRIQALAGWIAEQIGADVNHATRAGLLSKCDLMTNMVFEFTDTQGVMGMHYARHDGEAEDVAVALNEQYQPRFAGDDLPSNPVACALAIADKMDTLAGIFGIGQHPKGDKDPFALRRAALGVLRIIVEKNLNLDLKTLTEEAARLYGDKLTNANVVDDVIDFMLGRFRAWYQDEGYTVDTIQAVLARRPTRPADFDARMKAVSHFRTLEEASALAAANKRVSNILAKSDEVLNDRVNAATLKEPEEIALALQVVVLRDKLEPVFAEGRYQEALVELAELREPVDTFFEKVMVMVDDKDLRINRLSMLAKLRELFLQVADISLLQ.

It belongs to the class-II aminoacyl-tRNA synthetase family. Tetramer of two alpha and two beta subunits.

It is found in the cytoplasm. The enzyme catalyses tRNA(Gly) + glycine + ATP = glycyl-tRNA(Gly) + AMP + diphosphate. In Citrobacter koseri (strain ATCC BAA-895 / CDC 4225-83 / SGSC4696), this protein is Glycine--tRNA ligase beta subunit.